The following is a 37-amino-acid chain: Cytochrome b6-f complex subunit 5 (37 aa).

A helical membrane pass occupies residues 5–25 (LLFGIVLGLIPVTLTGLFVAA).

This sequence belongs to the PetG family. In terms of assembly, the 4 large subunits of the cytochrome b6-f complex are cytochrome b6, subunit IV (17 kDa polypeptide, PetD), cytochrome f and the Rieske protein, while the 4 small subunits are PetG, PetL, PetM and PetN. The complex functions as a dimer.

The protein localises to the plastid. The protein resides in the chloroplast thylakoid membrane. In terms of biological role, component of the cytochrome b6-f complex, which mediates electron transfer between photosystem II (PSII) and photosystem I (PSI), cyclic electron flow around PSI, and state transitions. PetG is required for either the stability or assembly of the cytochrome b6-f complex. In Guillardia theta (Cryptophyte), this protein is Cytochrome b6-f complex subunit 5.